The following is a 493-amino-acid chain: Galactose-1-phosphate uridylyltransferase (493 aa).

This sequence belongs to the galactose-1-phosphate uridylyltransferase type 2 family.

It is found in the cytoplasm. The enzyme catalyses alpha-D-galactose 1-phosphate + UDP-alpha-D-glucose = alpha-D-glucose 1-phosphate + UDP-alpha-D-galactose. It participates in carbohydrate metabolism; galactose metabolism. This chain is Galactose-1-phosphate uridylyltransferase, found in Streptococcus pneumoniae (strain Hungary19A-6).